Consider the following 211-residue polypeptide: uncharacterized protein (211 aa).

Disordered regions lie at residues 1–73 and 96–123; these read MLRR…SKLK and TNAA…ASLS. 2 stretches are compositionally biased toward polar residues: residues 26 to 35 and 53 to 62; these read SKSSLISLTS and APSQFLSPTN. Positions 63-73 are enriched in low complexity; sequence KRSTSSQSKLK. Serine 182 carries the phosphoserine modification. Threonine 184 bears the Phosphothreonine mark. The residue at position 186 (serine 186) is a Phosphoserine.

This is an uncharacterized protein from Saccharomyces cerevisiae (strain ATCC 204508 / S288c) (Baker's yeast).